The sequence spans 228 residues: Cytochrome c oxidase subunit 2 (228 aa).

Over 1-14 (MAYPFQLGFQDATS) the chain is Mitochondrial intermembrane. A helical membrane pass occupies residues 15 to 45 (PIMEELLHFHDHTLMIVFLISSLVLYIISLM). Over 46 to 59 (LTTKLTHTSTMDAQ) the chain is Mitochondrial matrix. Residues 60–87 (EVETIWTILPAIILILIALPSLRILYMM) form a helical membrane-spanning segment. Over 88 to 228 (DEINNPALTV…FEKWSTSMLT (141 aa)) the chain is Mitochondrial intermembrane. Positions 161, 196, 198, 200, 204, and 207 each coordinate Cu cation. Glu198 lines the Mg(2+) pocket. Phosphotyrosine is present on Tyr218.

This sequence belongs to the cytochrome c oxidase subunit 2 family. As to quaternary structure, component of the cytochrome c oxidase (complex IV, CIV), a multisubunit enzyme composed of 14 subunits. The complex is composed of a catalytic core of 3 subunits MT-CO1, MT-CO2 and MT-CO3, encoded in the mitochondrial DNA, and 11 supernumerary subunits COX4I, COX5A, COX5B, COX6A, COX6B, COX6C, COX7A, COX7B, COX7C, COX8 and NDUFA4, which are encoded in the nuclear genome. The complex exists as a monomer or a dimer and forms supercomplexes (SCs) in the inner mitochondrial membrane with NADH-ubiquinone oxidoreductase (complex I, CI) and ubiquinol-cytochrome c oxidoreductase (cytochrome b-c1 complex, complex III, CIII), resulting in different assemblies (supercomplex SCI(1)III(2)IV(1) and megacomplex MCI(2)III(2)IV(2)). Found in a complex with TMEM177, COA6, COX18, COX20, SCO1 and SCO2. Interacts with TMEM177 in a COX20-dependent manner. Interacts with COX20. Interacts with COX16. Requires Cu cation as cofactor.

It localises to the mitochondrion inner membrane. The enzyme catalyses 4 Fe(II)-[cytochrome c] + O2 + 8 H(+)(in) = 4 Fe(III)-[cytochrome c] + 2 H2O + 4 H(+)(out). Component of the cytochrome c oxidase, the last enzyme in the mitochondrial electron transport chain which drives oxidative phosphorylation. The respiratory chain contains 3 multisubunit complexes succinate dehydrogenase (complex II, CII), ubiquinol-cytochrome c oxidoreductase (cytochrome b-c1 complex, complex III, CIII) and cytochrome c oxidase (complex IV, CIV), that cooperate to transfer electrons derived from NADH and succinate to molecular oxygen, creating an electrochemical gradient over the inner membrane that drives transmembrane transport and the ATP synthase. Cytochrome c oxidase is the component of the respiratory chain that catalyzes the reduction of oxygen to water. Electrons originating from reduced cytochrome c in the intermembrane space (IMS) are transferred via the dinuclear copper A center (CU(A)) of subunit 2 and heme A of subunit 1 to the active site in subunit 1, a binuclear center (BNC) formed by heme A3 and copper B (CU(B)). The BNC reduces molecular oxygen to 2 water molecules using 4 electrons from cytochrome c in the IMS and 4 protons from the mitochondrial matrix. The chain is Cytochrome c oxidase subunit 2 (MT-CO2) from Sus scrofa (Pig).